We begin with the raw amino-acid sequence, 167 residues long: 3-isopropylmalate dehydratase small subunit (167 aa).

This sequence belongs to the LeuD family. LeuD type 2 subfamily. In terms of assembly, heterodimer of LeuC and LeuD.

The catalysed reaction is (2R,3S)-3-isopropylmalate = (2S)-2-isopropylmalate. It participates in amino-acid biosynthesis; L-leucine biosynthesis; L-leucine from 3-methyl-2-oxobutanoate: step 2/4. Functionally, catalyzes the isomerization between 2-isopropylmalate and 3-isopropylmalate, via the formation of 2-isopropylmaleate. This is 3-isopropylmalate dehydratase small subunit from Oleidesulfovibrio alaskensis (strain ATCC BAA-1058 / DSM 17464 / G20) (Desulfovibrio alaskensis).